A 230-amino-acid chain; its full sequence is 5'-methylthioadenosine/S-adenosylhomocysteine nucleosidase (230 aa).

The active-site Proton acceptor is the glutamate 12. Residues glycine 78, isoleucine 152, and 173–174 (ME) contribute to the substrate site. Aspartate 197 serves as the catalytic Proton donor.

Belongs to the PNP/UDP phosphorylase family. MtnN subfamily.

It carries out the reaction S-adenosyl-L-homocysteine + H2O = S-(5-deoxy-D-ribos-5-yl)-L-homocysteine + adenine. The catalysed reaction is S-methyl-5'-thioadenosine + H2O = 5-(methylsulfanyl)-D-ribose + adenine. It catalyses the reaction 5'-deoxyadenosine + H2O = 5-deoxy-D-ribose + adenine. Its pathway is amino-acid biosynthesis; L-methionine biosynthesis via salvage pathway; S-methyl-5-thio-alpha-D-ribose 1-phosphate from S-methyl-5'-thioadenosine (hydrolase route): step 1/2. Catalyzes the irreversible cleavage of the glycosidic bond in both 5'-methylthioadenosine (MTA) and S-adenosylhomocysteine (SAH/AdoHcy) to adenine and the corresponding thioribose, 5'-methylthioribose and S-ribosylhomocysteine, respectively. Also cleaves 5'-deoxyadenosine, a toxic by-product of radical S-adenosylmethionine (SAM) enzymes, into 5-deoxyribose and adenine. This Actinobacillus succinogenes (strain ATCC 55618 / DSM 22257 / CCUG 43843 / 130Z) protein is 5'-methylthioadenosine/S-adenosylhomocysteine nucleosidase.